We begin with the raw amino-acid sequence, 578 residues long: Protein RIK (578 aa).

The tract at residues Met1–Lys34 is disordered. The region spanning Ser206 to Ala273 is the KH domain. Positions Ala413 to Asn425 are enriched in polar residues. Residues Ala413–Ser578 are disordered. The span at Pro472–Ser492 shows a compositional bias: pro residues. Composition is skewed to low complexity over residues Lys493–Met503 and Ser510–Met521. Positions Tyr560–Glu572 are enriched in acidic residues.

Interacts with AS1. Expressed in vegetative tissues.

The protein localises to the nucleus. This Arabidopsis thaliana (Mouse-ear cress) protein is Protein RIK (RIK).